Reading from the N-terminus, the 251-residue chain is Tritrans,polycis-undecaprenyl-diphosphate synthase (geranylgeranyl-diphosphate specific) (251 aa).

The active site involves D29. D29 serves as a coordination point for Mg(2+). Substrate-binding positions include 30–33 (GNRR), F34, H46, and 74–76 (STE). N77 functions as the Proton acceptor in the catalytic mechanism. Residues F78, R80, R200, and 206 to 208 (RLS) each bind substrate.

The protein belongs to the UPP synthase family. In terms of assembly, homodimer. Requires Mg(2+) as cofactor.

The enzyme catalyses geranylgeranyl diphosphate + 7 isopentenyl diphosphate = tri-trans,hepta-cis-undecaprenyl diphosphate + 7 diphosphate. Functionally, catalyzes the sequential condensation of isopentenyl diphosphate (IPP) with geranylgeranyl diphosphate (GGPP) to yield (2Z,6Z,10Z,14Z,18Z,22Z,26Z,30E,34E,38E)-undecaprenyl diphosphate (tritrans,heptacis-UPP). It is probably the precursor of glycosyl carrier lipids. In Archaeoglobus fulgidus (strain ATCC 49558 / DSM 4304 / JCM 9628 / NBRC 100126 / VC-16), this protein is Tritrans,polycis-undecaprenyl-diphosphate synthase (geranylgeranyl-diphosphate specific).